A 131-amino-acid polypeptide reads, in one-letter code: Profilin (131 aa).

Belongs to the profilin family. As to quaternary structure, occurs in many kinds of cells as a complex with monomeric actin in a 1:1 ratio.

It is found in the cytoplasm. Its subcellular location is the cytoskeleton. Functionally, binds to actin and affects the structure of the cytoskeleton. At high concentrations, profilin prevents the polymerization of actin, whereas it enhances it at low concentrations. By binding to PIP2, it inhibits the formation of IP3 and DG. This Fragaria ananassa (Strawberry) protein is Profilin.